A 123-amino-acid polypeptide reads, in one-letter code: Holo-[acyl-carrier-protein] synthase (123 aa).

Mg(2+) contacts are provided by aspartate 9 and glutamate 57.

This sequence belongs to the P-Pant transferase superfamily. AcpS family. The cofactor is Mg(2+).

Its subcellular location is the cytoplasm. It carries out the reaction apo-[ACP] + CoA = holo-[ACP] + adenosine 3',5'-bisphosphate + H(+). In terms of biological role, transfers the 4'-phosphopantetheine moiety from coenzyme A to a Ser of acyl-carrier-protein. The chain is Holo-[acyl-carrier-protein] synthase from Streptomyces coelicolor (strain ATCC BAA-471 / A3(2) / M145).